Here is a 603-residue protein sequence, read N- to C-terminus: Thread biopolymer filament subunit gamma (603 aa).

The tract at residues 1–191 (MASHSSVSYR…ENETMEEELK (191 aa)) is head. An IF rod domain is found at 158-476 (VKNILGTLNQ…KLLEGQELMV (319 aa)). Positions 193–227 (LTGGVPMSPDSTVNLENVETQVTEMLTEVSNLTLE) are coil 1A. Residues 228-240 (RVRLEIDVDHLRA) are linker 1. Positions 241-341 (TADEIKSKYE…DALNVMREEY (101 aa)) are coil 1B. Residues 342-362 (QQVVTKNVQEAETYCKMQIDQ) are linker 12. The segment at 363–381 (IQGISTQTTEQISILDKEI) is coil 2A. The linker 2 stretch occupies residues 382–389 (NTLEKELQ). The interval 390–510 (PLNVEYQRLL…SSVGYGASST (121 aa)) is coil 2B. Residues 511–603 (TLGAISGGYS…GHDSTIILQQ (93 aa)) form a tail region. Residues 562 to 587 (SSSGGHSMYSSSSMKRSSSKSASASA) are compositionally biased toward low complexity. The interval 562 to 603 (SSSGGHSMYSSSSMKRSSSKSASASAGGYGTSGHDSTIILQQ) is disordered.

The protein belongs to the intermediate filament family. In terms of assembly, coiled-coil heterodimer of an alpha and a gamma subunit. Assemble into 10 nm filaments. Forms a massive, conical, intermediate filament biopolymer of approximately 60 cm.

It is found in the secreted. The protein resides in the extracellular space. Its function is as follows. Released extracellularly into seawater and provides physical and biological defense against invasive organism by modulation of the viscoelastic properties of mucus. This Eptatretus stoutii (Pacific hagfish) protein is Thread biopolymer filament subunit gamma.